We begin with the raw amino-acid sequence, 97 residues long: Cytochrome c2 iso-2 (97 aa).

Residues cysteine 10, cysteine 13, histidine 14, and methionine 75 each coordinate heme c.

Belongs to the cytochrome c family. In terms of processing, binds 1 heme c group covalently per subunit.

In terms of biological role, cytochrome c2 is found mainly in purple, non-sulfur, photosynthetic bacteria where it functions as the electron donor to the oxidized bacteriochlorophyll in the photophosphorylation pathway. However, it may also have a role in the respiratory chain and is found in some non-photosynthetic bacteria. This chain is Cytochrome c2 iso-2, found in Magnetospirillum molischianum (Rhodospirillum molischianum).